The chain runs to 241 residues: tRNA (guanine-N(7)-)-methyltransferase (241 aa).

4 residues coordinate S-adenosyl-L-methionine: Glu76, Glu101, Asp128, and Asp150. Asp150 is an active-site residue. Substrate is bound by residues Lys154, Asp186, and 219 to 222 (TRYE).

Belongs to the class I-like SAM-binding methyltransferase superfamily. TrmB family.

The enzyme catalyses guanosine(46) in tRNA + S-adenosyl-L-methionine = N(7)-methylguanosine(46) in tRNA + S-adenosyl-L-homocysteine. It functions in the pathway tRNA modification; N(7)-methylguanine-tRNA biosynthesis. Catalyzes the formation of N(7)-methylguanine at position 46 (m7G46) in tRNA. The protein is tRNA (guanine-N(7)-)-methyltransferase of Cereibacter sphaeroides (strain ATCC 17023 / DSM 158 / JCM 6121 / CCUG 31486 / LMG 2827 / NBRC 12203 / NCIMB 8253 / ATH 2.4.1.) (Rhodobacter sphaeroides).